A 360-amino-acid chain; its full sequence is MEMDLPVSAIGFEGFEKRLEISFVEPGLFADPNGKGLRSLSKAQLDEILGPAECTIVDNLSNDYVDSYVLSESSLFVYSYKIIIKTCGTTKLLLAIPPILRLAETLSLKVQDVRYTRGSFIFPGAQSFPHRHFSEEVAVLDGYFGKLAAGSKAVIMGSPDKTQKWHVYSASAGSVQSNDPVYTLEMCMTGLDREKASVFYKTEESSAAHMTVRSGIRKILPKSEICDFEFEPCGYSMNSIEGAAVSTIHITPEDGFTYASFESVGYNPKTMELGPLVERVLACFEPAEFSVALHADVATKLLERICSVDVKGYSLAEWSPEEFGEGGSIVYQKFTRTPYCESPKSVLKGCWKEEEKEGKE.

Residues glutamate 13 and glutamate 16 contribute to the active site. The Schiff-base intermediate with substrate; via pyruvic acid role is filled by serine 73. Serine 73 is modified (pyruvic acid (Ser); by autocatalysis). Catalysis depends on cysteine 87, which acts as the Proton donor; for catalytic activity. Residues serine 236 and histidine 249 each act as proton acceptor; for processing activity in the active site.

It belongs to the eukaryotic AdoMetDC family. Pyruvate is required as a cofactor. Post-translationally, is synthesized initially as an inactive proenzyme. Formation of the active enzyme involves a self-maturation process in which the active site pyruvoyl group is generated from an internal serine residue via an autocatalytic post-translational modification. Two non-identical subunits are generated from the proenzyme in this reaction, and the pyruvate is formed at the N-terminus of the alpha chain, which is derived from the carboxyl end of the proenzyme. The post-translation cleavage follows an unusual pathway, termed non-hydrolytic serinolysis, in which the side chain hydroxyl group of the serine supplies its oxygen atom to form the C-terminus of the beta chain, while the remainder of the serine residue undergoes an oxidative deamination to produce ammonia and the pyruvoyl group blocking the N-terminus of the alpha chain. In terms of tissue distribution, stolon, also expressed in leaves, stems and roots.

It carries out the reaction S-adenosyl-L-methionine + H(+) = S-adenosyl 3-(methylsulfanyl)propylamine + CO2. The protein operates within amine and polyamine biosynthesis; S-adenosylmethioninamine biosynthesis; S-adenosylmethioninamine from S-adenosyl-L-methionine: step 1/1. The chain is S-adenosylmethionine decarboxylase proenzyme (SAMDC) from Solanum tuberosum (Potato).